A 570-amino-acid polypeptide reads, in one-letter code: L-ascorbate oxidase (570 aa).

The N-terminal stretch at Met1 to Ala18 is a signal peptide. Plastocyanin-like domains lie at Trp33 to Val140 and Phe154 to Val317. Cystine bridges form between Cys36–Cys219, Cys98–Cys557, and Cys197–Cys211. Cu cation-binding residues include His77 and His79. Asn109 carries an N-linked (GlcNAc...) asparagine glycan. Cu cation contacts are provided by His121 and His123. Residue Asn196 is glycosylated (N-linked (GlcNAc...) asparagine). N-linked (GlcNAc...) asparagine glycans are attached at residues Asn229, Asn343, Asn384, Asn407, Asn434, Asn442, and Asn458. The Plastocyanin-like 3 domain maps to Arg426–Gly543. Cu cation is bound by residues His463, His466, His468, His525, Cys526, His527, His531, and Met536.

Belongs to the multicopper oxidase family. As to quaternary structure, dimer. The cofactor is Cu cation.

It is found in the secreted. The enzyme catalyses 4 L-ascorbate + O2 = 4 monodehydro-L-ascorbate radical + 2 H2O. It participates in cofactor degradation; L-ascorbate degradation. Its function is as follows. Ascorbate oxidase involved in a redox system involving ascorbic acid (AsA). The oxidation of AsA represses responses to high salinity and oxidative stress conditions such as vegetative growth and seed production reductions. Negative regulator of defense responses toward incompatible Turnip mosaic virus (TuMV strain UK1) by preventing jasmonic acid (JA)- dependent accumulation of ascorbic acid (AsA, AS) and dehydroascobic acid (DHA). In Brassica rapa subsp. pekinensis (Chinese cabbage), this protein is L-ascorbate oxidase.